Reading from the N-terminus, the 295-residue chain is tRNA pseudouridine synthase B (295 aa).

D42 functions as the Nucleophile in the catalytic mechanism.

The protein belongs to the pseudouridine synthase TruB family. Type 1 subfamily.

The catalysed reaction is uridine(55) in tRNA = pseudouridine(55) in tRNA. Its function is as follows. Responsible for synthesis of pseudouridine from uracil-55 in the psi GC loop of transfer RNAs. The polypeptide is tRNA pseudouridine synthase B (Cutibacterium acnes (strain DSM 16379 / KPA171202) (Propionibacterium acnes)).